Reading from the N-terminus, the 170-residue chain is ATP synthase subunit b (170 aa).

A helical transmembrane segment spans residues 15 to 37 (GDILFQLLAMLILLALLKKYALG).

Belongs to the ATPase B chain family. In terms of assembly, F-type ATPases have 2 components, F(1) - the catalytic core - and F(0) - the membrane proton channel. F(1) has five subunits: alpha(3), beta(3), gamma(1), delta(1), epsilon(1). F(0) has three main subunits: a(1), b(2) and c(10-14). The alpha and beta chains form an alternating ring which encloses part of the gamma chain. F(1) is attached to F(0) by a central stalk formed by the gamma and epsilon chains, while a peripheral stalk is formed by the delta and b chains. The F(1)F(0) complex interacts with SpoIIIJ and YqjG; YqgA is found in the same complex.

Its subcellular location is the cell membrane. In terms of biological role, f(1)F(0) ATP synthase produces ATP from ADP in the presence of a proton or sodium gradient. F-type ATPases consist of two structural domains, F(1) containing the extramembraneous catalytic core and F(0) containing the membrane proton channel, linked together by a central stalk and a peripheral stalk. During catalysis, ATP synthesis in the catalytic domain of F(1) is coupled via a rotary mechanism of the central stalk subunits to proton translocation. Its function is as follows. Component of the F(0) channel, it forms part of the peripheral stalk, linking F(1) to F(0). This chain is ATP synthase subunit b, found in Bacillus subtilis (strain 168).